Reading from the N-terminus, the 288-residue chain is NAD kinase (288 aa).

Asp70 functions as the Proton acceptor in the catalytic mechanism. Residues 70-71 (DG), 144-145 (ND), Arg155, Lys172, Asp174, 185-190 (TGYSLS), and Gln245 each bind NAD(+).

Belongs to the NAD kinase family. A divalent metal cation serves as cofactor.

The protein resides in the cytoplasm. The catalysed reaction is NAD(+) + ATP = ADP + NADP(+) + H(+). Involved in the regulation of the intracellular balance of NAD and NADP, and is a key enzyme in the biosynthesis of NADP. Catalyzes specifically the phosphorylation on 2'-hydroxyl of the adenosine moiety of NAD to yield NADP. In Geobacter sp. (strain M21), this protein is NAD kinase.